The sequence spans 597 residues: Alkyldihydroxyacetonephosphate synthase (597 aa).

An FAD-binding PCMH-type domain is found at 131-313; sequence IPRLPDIVVW…SEVTIKIFPI (183 aa). FAD contacts are provided by residues 163–169, 232–238, 245–248, and 297–303; these read PIGGGTS, DSIEFST, TRAS, and EGTLGVV. Arg444 contacts substrate. The active-site Proton donor/acceptor is the Tyr507. The tract at residues 544 to 546 is important for enzyme activity; the sequence is HHH. The short motif at 595-597 is the Microbody targeting signal element; sequence CKL.

It belongs to the FAD-binding oxidoreductase/transferase type 4 family. As to quaternary structure, homodimer. FAD is required as a cofactor.

Its subcellular location is the peroxisome. It carries out the reaction a long chain fatty alcohol + a 1-acylglycerone 3-phosphate = a 1-O-alkylglycerone 3-phosphate + a long-chain fatty acid + H(+). It participates in glycerolipid metabolism; ether lipid biosynthesis. Catalyzes the exchange of an acyl for a long-chain alkyl group and the formation of the ether bond in the biosynthesis of ether phospholipids. The chain is Alkyldihydroxyacetonephosphate synthase (ads-1) from Caenorhabditis elegans.